The following is a 251-amino-acid chain: Hydroxyacylglutathione hydrolase (251 aa).

H59, H61, D63, H64, H118, D141, and H179 together coordinate Zn(2+).

This sequence belongs to the metallo-beta-lactamase superfamily. Glyoxalase II family. As to quaternary structure, monomer. Requires Zn(2+) as cofactor.

It carries out the reaction an S-(2-hydroxyacyl)glutathione + H2O = a 2-hydroxy carboxylate + glutathione + H(+). It participates in secondary metabolite metabolism; methylglyoxal degradation; (R)-lactate from methylglyoxal: step 2/2. Thiolesterase that catalyzes the hydrolysis of S-D-lactoyl-glutathione to form glutathione and D-lactic acid. The protein is Hydroxyacylglutathione hydrolase of Prochlorococcus marinus (strain NATL1A).